A 472-amino-acid polypeptide reads, in one-letter code: F420-non-reducing hydrogenase subunit A (472 aa).

4 residues coordinate Ni(2+): C61, C64, C442, and C445.

It belongs to the [NiFe]/[NiFeSe] hydrogenase large subunit family. As to quaternary structure, the F420-non-reducing hydrogenase is composed of three subunits; MvhA, MvhD and MvhG. It forms a complex with the heterodisulfide reductase (hdr). Ni(2+) is required as a cofactor.

Part of a complex that provides reducing equivalents for heterodisulfide reductase. This chain is F420-non-reducing hydrogenase subunit A (mvhA), found in Methanothermobacter marburgensis (strain ATCC BAA-927 / DSM 2133 / JCM 14651 / NBRC 100331 / OCM 82 / Marburg) (Methanobacterium thermoautotrophicum).